A 379-amino-acid polypeptide reads, in one-letter code: Lipid-A-disaccharide synthase (379 aa).

The protein belongs to the LpxB family.

The catalysed reaction is a lipid X + a UDP-2-N,3-O-bis[(3R)-3-hydroxyacyl]-alpha-D-glucosamine = a lipid A disaccharide + UDP + H(+). Its pathway is bacterial outer membrane biogenesis; LPS lipid A biosynthesis. Condensation of UDP-2,3-diacylglucosamine and 2,3-diacylglucosamine-1-phosphate to form lipid A disaccharide, a precursor of lipid A, a phosphorylated glycolipid that anchors the lipopolysaccharide to the outer membrane of the cell. The sequence is that of Lipid-A-disaccharide synthase from Idiomarina loihiensis (strain ATCC BAA-735 / DSM 15497 / L2-TR).